The primary structure comprises 365 residues: MGNITTENSSLSCPIDHTIHQTLAPVVYVTVLVVGFPANCLSLYFGYLQIKARNELGVYLCNLTIADLFYICSLPFWLQYVLQHDDWSHGDLSCQVCGILLYENIYISVGFLCCISIDRYLAVAHPFRFHQFRTLKAAVGVSVLIWAKELLTSIYFLNHKEVIEDEDQHRVCFEHYPIQAWQRSINYYRFLVGFLFPICLLLASYQGILRAVRRSHGTQKSRKDQIQRLVLSTVVIFLACFLPYHVLLLVRSLWERNCEFAKSIFNVYHFSLLLTSFNCVADPVLYCFVSETTHRDLARLRGACLAVLTCSRTSRAREAYPLGAPEASGKSGAQGEEPELLTKLHSAFQTPSSLGVGGPSTVGLA.

Over 1–12 (MGNITTENSSLS) the chain is Extracellular. Asn3 and Asn8 each carry an N-linked (GlcNAc...) asparagine glycan. Residues 13-49 (CPIDHTIHQTLAPVVYVTVLVVGFPANCLSLYFGYLQ) form a helical membrane-spanning segment. 2 disulfides stabilise this stretch: Cys13/Cys258 and Cys94/Cys172. At 50-53 (IKAR) the chain is on the cytoplasmic side. A helical membrane pass occupies residues 54 to 84 (NELGVYLCNLTIADLFYICSLPFWLQYVLQH). At 85–89 (DDWSH) the chain is on the extracellular side. The helical transmembrane segment at 90–125 (GDLSCQVCGILLYENIYISVGFLCCISIDRYLAVAH) threads the bilayer. At 126 to 133 (PFRFHQFR) the chain is on the cytoplasmic side. A helical membrane pass occupies residues 134–160 (TLKAAVGVSVLIWAKELLTSIYFLNHK). The Extracellular segment spans residues 161-176 (EVIEDEDQHRVCFEHY). The segment at 161–176 (EVIEDEDQHRVCFEHY) is extracellular loop 2 (ECL2). The chain crosses the membrane as a helical span at residues 177 to 214 (PIQAWQRSINYYRFLVGFLFPICLLLASYQGILRAVRR). Topologically, residues 215-218 (SHGT) are cytoplasmic. A helical transmembrane segment spans residues 219–254 (QKSRKDQIQRLVLSTVVIFLACFLPYHVLLLVRSLW). The Extracellular portion of the chain corresponds to 255 to 260 (ERNCEF). A helical transmembrane segment spans residues 261 to 289 (AKSIFNVYHFSLLLTSFNCVADPVLYCFV). Residues 290 to 365 (SETTHRDLAR…VGGPSTVGLA (76 aa)) lie on the Cytoplasmic side of the membrane.

This sequence belongs to the G-protein coupled receptor 1 family. Expressed in the lung, testis, heart, brain, spleen, thymus, brown fat, small intestine, colon, peripheral blood leukocytes, macrophages, stomach, ovary and white fat but not in the liver, kidney, and skeletal muscle. Expression in the prostate is weak but detectable. Specifically expressed in endothelial cells of small-diameter resistance arteries.

The protein localises to the cell membrane. With respect to regulation, activated by a network of residues that connects an extracellular-facing cavity to Glu-149, a conserved charged residue buried in the transmembrane core of the receptor. Protonation likely drives conformational changes in extracellular loop 2 (ECL2), which stabilizes movement of transmembrane 3 (TM3) and a series of rearrangements that connect the extracellular-facing cavity to Glu-149, a residue only conserved in proton-sensing G-protein coupled receptors. Activated in an allosteric manner by divalent metal ions at the extracellular surface following the order: Cd(2+) &gt; Co(2+) &gt; Ni(2+) &gt; Zn(2+) &gt; Fe(2+) &gt; Ca(2+) &gt; Mg(2+). Activated by ogerin (ZINC67740571), a selective GPR68 positive allosteric modulator. Inhibited by small molecule GPR68-I, decreasing inflammation in models of colitis. Its function is as follows. Proton-sensing G-protein coupled receptor activated by extracellular pH, which is required to monitor pH changes and generate adaptive reactions. The receptor is almost silent at pH 7.8 but fully activated at pH 6.8. Ligand binding causes a conformation change that triggers signaling via guanine nucleotide-binding proteins (G proteins) and modulates the activity of downstream effectors, such as phospholipase C. GPR68 is mainly coupled to G(q) G proteins and mediates production of diacylglycerol (DAG) and inositol 1,4,5-trisphosphate (IP3). Acts as a key mechanosensor of fluid shear stress and membrane stretch. Expressed in endothelial cells of small-diameter resistance arteries, where it mediates flow-induced dilation in response to shear stress. May represents an osteoblastic pH sensor regulating cell-mediated responses to acidosis in bone. Acts as a regulator of calcium-sensing receptor CASR in a seesaw manner: GPR68-mediated signaling inhibits CASR signaling in response to protons, while CASR inhibits GPR68 in presence of extracellular calcium. Also functions as a metastasis suppressor gene in prostate cancer. This is G-protein coupled receptor 68 from Mus musculus (Mouse).